A 228-amino-acid chain; its full sequence is Large ribosomal subunit protein bL25 (228 aa).

Residues glutamate 196–alanine 228 are disordered. Residues alanine 209–alanine 228 are compositionally biased toward basic and acidic residues.

The protein belongs to the bacterial ribosomal protein bL25 family. CTC subfamily. As to quaternary structure, part of the 50S ribosomal subunit; part of the 5S rRNA/L5/L18/L25 subcomplex. Contacts the 5S rRNA. Binds to the 5S rRNA independently of L5 and L18.

In terms of biological role, this is one of the proteins that binds to the 5S RNA in the ribosome where it forms part of the central protuberance. In Methylorubrum extorquens (strain PA1) (Methylobacterium extorquens), this protein is Large ribosomal subunit protein bL25.